A 629-amino-acid chain; its full sequence is Interleukin-23 receptor (629 aa).

An N-terminal signal peptide occupies residues Met-1–Gly-23. Residues Gly-24–Gly-355 lie on the Extracellular side of the membrane. Asn-29 carries N-linked (GlcNAc...) asparagine; partial glycosylation. Asn-47, Asn-81, and Asn-141 each carry an N-linked (GlcNAc...) asparagine glycan. Fibronectin type-III domains lie at Ile-127–Ile-217 and Ile-219–Thr-318. Residue Asn-180 is glycosylated (N-linked (GlcNAc...) (high mannose) asparagine). N-linked (GlcNAc...) asparagine glycans are attached at residues Asn-232 and Asn-262. The N-linked (GlcNAc...) asparagine; partial glycan is linked to Asn-273. The chain crosses the membrane as a helical span at residues Leu-356–Phe-376. Residues Asn-377–Lys-629 are Cytoplasmic-facing.

Belongs to the type I cytokine receptor family. Type 2 subfamily. Heterodimer with IL12RB1. In presence of IL23, the heterodimer forms the IL23 receptor. Interacts with JAK2 and in presence of IL23 with STAT3. Phosphorylated in response to IL23. As to expression, expressed by monocytes, Th1, Th0, NK and dendritic cells. Isoform 1 is specifically expressed in NK cells.

The protein resides in the cell membrane. In terms of biological role, associates with IL12RB1 to form the interleukin-23 receptor. Binds IL23 and mediates T-cells, NK cells and possibly certain macrophage/myeloid cells stimulation probably through activation of the Jak-Stat signaling cascade. IL23 functions in innate and adaptive immunity and may participate in acute response to infection in peripheral tissues. IL23 may be responsible for autoimmune inflammatory diseases and be important for tumorigenesis. The chain is Interleukin-23 receptor (IL23R) from Homo sapiens (Human).